The sequence spans 2262 residues: MEMQQENETGREGVIPNSEKEVALISNQETEKAAMISGGKEGSVRDLESPNETATTQKIEHTTKPLKLDGIFAMPATPPNKAGLATKSASSSRSSSLKKQRRGSRGSANLNVAGMGDGAPKRSAPGGGQLNYGTNSVGNDLMKQSQSMTSLKASNEEQQESRDVIQAKLHLERPYNSLKKNSHSNKMHRYSWGSGNSQCSSTSLHSSATLGLGSSGKDDLWAAIQTNYNYIMDTNLLDTCKEARCEIEGAATVLEKSSECSFKMLDETQRPEGLCEDPKELRRSWREMENKLESSPTITELTLFGNAELQRHLAVHSVLYHEIASHARVVSSCIRAAEKEQQLQQQQQLSSQQPASLTSNCSSESTSESATKSSSLSSGFASDPVTTPIGTAAAAPPSSSTHPSKKGEGNLERLRDRYHLLYLKAFELQLCLDNLLRKRSSAANGLDDDEDEEEDTEDDSFGYEGEATEDDLNEVNSDLDLENSESKSATPAELILQRCQIAATQIVCGLDETQSQSRSQQVPSQAKSPSADQPRDCLAPQKPGDEADEELEEEDEDPDIGTDVVDFLIAKRSWRQVNHPNPSGTATLTDFEADSESSDFEQVQQLSRRGLPPTVGSTRRVLNLIEMPQSSNTNISSSNSLLQQRNHNIGNKMLPNKAHGKNIAVAVITPNSHGNTSHGHGLGHGLGHELNKSPLGLRKTRHHHNDTSKFNRSNRKSKNCAIFYFKHLDTDNEQGNAAGSDLQSEDDPSLIHRRRAGGDILKSADASTDDDDEGCLYTATAAATLEVATAATAAPTAAAATSSVDGLQSTAVSSTTATGGPLPPSDDSDKENKVALVSASTITAARTATATSIATLHSSNYDSSSACSSSNSNSNSNSNSNGRLTETSATSRVTQLQMQIHSQSQSQSQMELQINGNAIDGRHIISNNNCYSSMQHQPQNNNEGEAAEDLAKIKMGDDEAAADMANGNATKSQQMSNGVYSRADSCNFTVWAAETVASCHLPPRSPAKSAKSTKSQASNATVSGSTLVSPVKGKVSHDSIKQLVLKAEHLVRDAQETALKTPTKQKHSIIKISSTVKKREVTMPHPIKQRVEEWLEHQPSTPQLLTRSHTNELLPSCKPDDCEASGEASETDSVPQAGAGVNGGAPNGAGSDTSEGFTDSIATCMQTSTNSYGNSTERIGGSAEPIGQPVTPLGFGSSNQSLNVKIVKRSQTRRKSERPWSVSCLSQLTTDAAQLTTARIVENSPSGLASHSISESALDSLSPGPRPRAASSSGTGSNAAKKADSKGSLRRRKARKKRISAASAGRKSDSGSELGGDLTQTLMKSCESMSSQQLQEFTNALLSIQKGAVVAPLSPKGEVSGVPSLHDGEGGETQLMLPKFRVGSFTTAGLLATDTRLGALAALSNYMNEDEQQAELSTEDHHSSISETAWDNYQEKYNSENYSEGFDSDAARRLLEFGDDYRNFIDSQSDCCSSLSAANNLDSFSPPRMDSLQKHELKSLHINQDTITSSVDHARRQRALELQYERRRKTLEVRRKSCQDMDESLMASPQSDQQQQQLQVTPSLSASATALMTTPKNQSTSHQISHRAESVGRKLDFGGMSHSAQSLLRRTSESDTSTRRRRTVTADERRRSSRNLEKCIKLIPATTSSSSGSDSEDGEQEMRSLLQQSRDRLDDTRALKIRCHLLRPEDYNEIINTCRDNIRCLEAVLRGPPGTVLSNHCAGQTKDLLGAWEDLLSWSENASAARKLQQEMSVLKSSLQRLGDKPTPELLDTEPAIQIAVEALKLEQTQLTSYRTNMLRLNASVHSWLTKQERRLQSALEEQEQQQESEQLKQQKLVEEEKGADVQKELASTGAVAITVTDSNGNQVEALATGEASTSTPAWDVHSLMSSEQEFHKHLKNEVSDMYSAWDEADARINTQLEMLTNSLIAWRQLESGLSEFQLALGQDRGTLKGLEGALDKGQATPVELAQNVKLVAKLLSEKVHVSQEQLLAVQQHLDPNHIYHITKFTASNGSLSDSGISDGGATSDGGLSERERRLGVLRRLAKQLELALAPGSEAMRSIAARMESAEADLKHLQNTCRDLIVRTAASHQQKQQIQQNQTQQVSPKANGHIKKQAAKGKAEPQSPGRRGKGARKARQAKKAGEDQQVEEPSLSPEQQKMVLKQLKTLTSGDGGDDPSDDPSLLFNLESSEEDGEGADPAQTSKRGWAWRIARAAVPMQVALFTIFCAACLMQPNCCDNLNNLSMSFTPQLRYIRGPPPI.

Disordered stretches follow at residues 1 to 140, 345 to 410, 442 to 475, 514 to 561, 800 to 832, 859 to 898, 1000 to 1031, 1115 to 1157, 1246 to 1316, and 1533 to 1670; these read MEMQ…VGND, QQQQ…GEGN, AANG…LNEV, QSQS…PDIG, ATSS…DKEN, SNYD…QLQM, HLPP…VSPV, PSCK…SEGF, SGLA…ELGG, and VRRK…QQSR. A required for apical microtubules localization region spans residues 1 to 1774; the sequence is MEMQQENETG…KPTPELLDTE (1774 aa). Residues 1 to 2215 lie on the Cytoplasmic side of the membrane; sequence MEMQQENETG…KRGWAWRIAR (2215 aa). Basic and acidic residues predominate over residues 58-67; the sequence is KIEHTTKPLK. Positions 131–140 are enriched in polar residues; the sequence is NYGTNSVGND. Over residues 345–402 the composition is skewed to low complexity; sequence QQQQLSSQQPASLTSNCSSESTSESATKSSSLSSGFASDPVTTPIGTAAAAPPSSSTH. The segment covering 446–475 has biased composition (acidic residues); sequence LDDDEDEEEDTEDDSFGYEGEATEDDLNEV. Low complexity predominate over residues 514 to 525; it reads QSQSRSQQVPSQ. Acidic residues predominate over residues 546 to 560; it reads EADEELEEEDEDPDI. 2 stretches are compositionally biased toward low complexity: residues 809 to 818 and 859 to 881; these read STAVSSTTAT and SNYD…SNSN. Over residues 882 to 894 the composition is skewed to polar residues; that stretch reads GRLTETSATSRVT. Residues 1006–1018 show a composition bias toward low complexity; that stretch reads PAKSAKSTKSQAS. The span at 1019 to 1028 shows a compositional bias: polar residues; it reads NATVSGSTLV. The span at 1246-1259 shows a compositional bias: polar residues; the sequence is SGLASHSISESALD. Residues 1267 to 1280 are compositionally biased toward low complexity; that stretch reads PRAASSSGTGSNAA. Basic residues predominate over residues 1288 to 1299; that stretch reads SLRRRKARKKRI. Low complexity predominate over residues 1550 to 1559; it reads QSDQQQQQLQ. A compositionally biased stretch (polar residues) spans 1560 to 1583; the sequence is VTPSLSASATALMTTPKNQSTSHQ. 2 stretches are compositionally biased toward basic and acidic residues: residues 1586–1596 and 1610–1640; these read HRAESVGRKLD and RTSE…EKCI. A coiled-coil region spans residues 1809-1842; sequence LTKQERRLQSALEEQEQQQESEQLKQQKLVEEEK. Residues 2092 to 2205 form a disordered region; it reads HQQKQQIQQN…GEGADPAQTS (114 aa). Residues 2093–2105 are compositionally biased toward low complexity; it reads QQKQQIQQNQTQQ. The segment covering 2130–2142 has biased composition (basic residues); sequence RRGKGARKARQAK. One can recognise a KASH domain in the interval 2207-2262; that stretch reads RGWAWRIARAAVPMQVALFTIFCAACLMQPNCCDNLNNLSMSFTPQLRYIRGPPPI. The chain crosses the membrane as a helical; Anchor for type IV membrane protein span at residues 2216 to 2236; the sequence is AAVPMQVALFTIFCAACLMQP. Residues 2237–2262 are Perinuclear space-facing; the sequence is NCCDNLNNLSMSFTPQLRYIRGPPPI.

The protein belongs to the nesprin family. In terms of assembly, core component of LINC complexes which are composed of inner nuclear membrane SUN domain-containing proteins coupled to outer nuclear membrane KASH domain-containing nesprins. Interacts with kud. Interacts with Msp300; this interaction allows the anchoring of Msp300 nuclear ring structure to the nuclear envelope. In terms of tissue distribution, expressed ubiquitously in the eye disk, but at much higher levels posterior to the morphogenetic furrow. Expressed in R-cells and also in non-neural cone cells.

It is found in the cytoplasm. The protein resides in the cytoskeleton. The protein localises to the microtubule organizing center. Its subcellular location is the perinuclear region. It localises to the nucleus membrane. It is found in the nucleus envelope. Component of the LINC (LInker of Nucleoskeleton and Cytoskeleton) complex involved in the connection between the nuclear lamina and the cytoskeleton. Plays a role in the nuclear positioning and links the nucleus to the microtubule organizing center (MTOC). Collaborates with Klar to promote even spacing of the myonuclei at the periphery of striated muscle fibers by mediating a tight association between a nuclear ring structure of Msp300 and the plus ends of a unique astral microtubule (MT) network. The polypeptide is Klarsicht protein (Drosophila melanogaster (Fruit fly)).